Here is a 412-residue protein sequence, read N- to C-terminus: Serine hydroxymethyltransferase (412 aa).

(6S)-5,6,7,8-tetrahydrofolate contacts are provided by residues leucine 117 and 121-123 (GHL). An N6-(pyridoxal phosphate)lysine modification is found at lysine 226. (6S)-5,6,7,8-tetrahydrofolate contacts are provided by residues glutamate 242 and 350 to 352 (SPF).

It belongs to the SHMT family. In terms of assembly, homodimer. Pyridoxal 5'-phosphate is required as a cofactor.

Its subcellular location is the cytoplasm. It catalyses the reaction (6R)-5,10-methylene-5,6,7,8-tetrahydrofolate + glycine + H2O = (6S)-5,6,7,8-tetrahydrofolate + L-serine. The protein operates within one-carbon metabolism; tetrahydrofolate interconversion. Its pathway is amino-acid biosynthesis; glycine biosynthesis; glycine from L-serine: step 1/1. Catalyzes the reversible interconversion of serine and glycine with tetrahydrofolate (THF) serving as the one-carbon carrier. Also exhibits THF-independent aldolase activity toward beta-hydroxyamino acids, producing glycine and aldehydes, via a retro-aldol mechanism. The polypeptide is Serine hydroxymethyltransferase (Methanosarcina acetivorans (strain ATCC 35395 / DSM 2834 / JCM 12185 / C2A)).